A 193-amino-acid polypeptide reads, in one-letter code: Peptidyl-tRNA hydrolase (193 aa).

A tRNA-binding site is contributed by Tyr-17. His-22 (proton acceptor) is an active-site residue. Tyr-68, Asn-70, and Asn-116 together coordinate tRNA.

It belongs to the PTH family. Monomer.

It localises to the cytoplasm. It carries out the reaction an N-acyl-L-alpha-aminoacyl-tRNA + H2O = an N-acyl-L-amino acid + a tRNA + H(+). Functionally, hydrolyzes ribosome-free peptidyl-tRNAs (with 1 or more amino acids incorporated), which drop off the ribosome during protein synthesis, or as a result of ribosome stalling. Catalyzes the release of premature peptidyl moieties from peptidyl-tRNA molecules trapped in stalled 50S ribosomal subunits, and thus maintains levels of free tRNAs and 50S ribosomes. The protein is Peptidyl-tRNA hydrolase of Acinetobacter baumannii (strain AB307-0294).